The sequence spans 130 residues: Small ribosomal subunit protein uS8 (130 aa).

It belongs to the universal ribosomal protein uS8 family. As to quaternary structure, part of the 30S ribosomal subunit. Contacts proteins S5 and S12.

One of the primary rRNA binding proteins, it binds directly to 16S rRNA central domain where it helps coordinate assembly of the platform of the 30S subunit. The sequence is that of Small ribosomal subunit protein uS8 from Vibrio campbellii (strain ATCC BAA-1116).